The following is a 1481-amino-acid chain: Cystic fibrosis transmembrane conductance regulator (1481 aa).

Topologically, residues M1–F77 are cytoplasmic. Residues F78–Q98 traverse the membrane as a helical segment. The ABC transmembrane type-1 1 domain occupies F81–L365. The Extracellular segment spans residues P99–Y122. The chain crosses the membrane as a helical span at residues L123–H146. The Cytoplasmic segment spans residues H147 to L195. Residues A196–W216 traverse the membrane as a helical segment. At E217–S222 the chain is on the extracellular side. A helical membrane pass occupies residues A223 to M243. Residues M244–K298 are Cytoplasmic-facing. The helical transmembrane segment at A299–F319 threads the bilayer. Topologically, residues L320 to T339 are extracellular. Residues I340–V358 form a helical membrane-spanning segment. Topologically, residues Q359 to S858 are cytoplasmic. ATP-binding positions include W401, S434, G458–T465, and Q493. One can recognise an ABC transporter 1 domain in the interval N423 to G646. C524 carries S-palmitoyl cysteine lipidation. 2 positions are modified to phosphoserine: S549 and S660. Residues S654–E831 form a disordered R region region. The residue at position 670 (S670) is a Phosphoserine; by PKA. S686 carries the phosphoserine modification. Residue K688 forms a Glycyl lysine isopeptide (Lys-Gly) (interchain with G-Cter in ubiquitin) linkage. Phosphoserine is present on residues S700 and S712. T717 is modified (phosphothreonine). Phosphoserine occurs at positions 737, 753, 768, 790, 795, and 813. The chain crosses the membrane as a helical span at residues L859–V879. The ABC transmembrane type-1 2 domain occupies L859–S1155. Residues V880 to I918 are Extracellular-facing. Residues N894 and N900 are each glycosylated (N-linked (GlcNAc...) asparagine). Residues Y919 to H939 traverse the membrane as a discontinuously helical segment. Residues T940–T990 are Cytoplasmic-facing. A helical transmembrane segment spans residues I991–L1011. The Extracellular segment spans residues Q1012–P1013. The helical transmembrane segment at Y1014–L1034 threads the bilayer. Over Q1035–T1095 the chain is Cytoplasmic. Residues L1096–F1116 traverse the membrane as a helical segment. Over I1117–G1130 the chain is Extracellular. The helical transmembrane segment at I1131–I1151 threads the bilayer. Residues D1152–L1481 lie on the Cytoplasmic side of the membrane. An ABC transporter 2 domain is found at M1211–P1444. Residues Y1220 and G1245–S1252 each bind ATP. Residues R1387–L1481 form an interaction with GORASP2 region. The S-palmitoyl cysteine moiety is linked to residue C1396. S1445 and S1457 each carry phosphoserine. The short motif at T1479–L1481 is the PDZ-binding element.

This sequence belongs to the ABC transporter superfamily. ABCC family. CFTR transporter (TC 3.A.1.202) subfamily. Monomer; does not require oligomerization for channel activity. May form oligomers in the membrane. Interacts with SLC26A3, SLC26A6 and NHERF1. Interacts with SHANK2. Interacts with MYO6. Interacts (via C-terminus) with GOPC (via PDZ domain); this promotes CFTR internalization and thereby decreases channel activity. Interacts with SLC4A7 through NHERF1. Found in a complex with MYO5B and RAB11A. Interacts with ANO1. Interacts with SLC26A8. Interacts with AHCYL1; the interaction increases CFTR activity. Interacts with CSE1L. The core-glycosylated form interacts with GORASP2 (via PDZ GRASP-type 1 domain) in respone to ER stress. Interacts with MARCHF2; the interaction leads to CFTR ubiqtuitination and degradation. Interacts with ADGRG2. In terms of processing, N-glycosylated. Phosphorylated; cAMP treatment promotes phosphorylation and activates the channel. Dephosphorylation decreases the ATPase activity (in vitro). Phosphorylation at PKA sites activates the channel. Phosphorylation at PKC sites enhances the response to phosphorylation by PKA. Phosphorylated by AMPK; this inhibits channel activity. Post-translationally, ubiquitinated, leading to its degradation in the lysosome. Deubiquitination by USP10 in early endosomes enhances its endocytic recycling to the cell membrane. Ubiquitinated by RNF185 during ER stress. Ubiquitinated by MARCHF2.

Its subcellular location is the apical cell membrane. The protein resides in the early endosome membrane. The protein localises to the cell membrane. It localises to the recycling endosome membrane. It is found in the endoplasmic reticulum membrane. Its subcellular location is the nucleus. The enzyme catalyses ATP + H2O + closed Cl(-) channel = ADP + phosphate + open Cl(-) channel.. The catalysed reaction is chloride(in) = chloride(out). It catalyses the reaction hydrogencarbonate(in) = hydrogencarbonate(out). It carries out the reaction ATP + H2O = ADP + phosphate + H(+). Its function is as follows. Epithelial ion channel that plays an important role in the regulation of epithelial ion and water transport and fluid homeostasis. Mediates the transport of chloride ions across the cell membrane. Possesses an intrinsic ATPase activity and utilizes ATP to gate its channel; the passive flow of anions through the channel is gated by cycles of ATP binding and hydrolysis by the ATP-binding domains. The ion channel is also permeable to HCO(3)(-); selectivity depends on the extracellular chloride concentration. Exerts its function also by modulating the activity of other ion channels and transporters. Contributes to the regulation of the pH and the ion content of the epithelial fluid layer. Modulates the activity of the epithelial sodium channel (ENaC) complex, in part by regulating the cell surface expression of the ENaC complex. May regulate bicarbonate secretion and salvage in epithelial cells by regulating the transporter SLC4A7. Can inhibit the chloride channel activity of ANO1. Plays a role in the chloride and bicarbonate homeostasis during sperm epididymal maturation and capacitation. The sequence is that of Cystic fibrosis transmembrane conductance regulator from Macaca fascicularis (Crab-eating macaque).